The chain runs to 514 residues: Probable cytosol aminopeptidase (514 aa).

Lysine 266 and aspartate 271 together coordinate Mn(2+). The active site involves lysine 278. Positions 289, 357, and 359 each coordinate Mn(2+). Arginine 361 is an active-site residue.

Belongs to the peptidase M17 family. Mn(2+) serves as cofactor.

The protein resides in the cytoplasm. It carries out the reaction Release of an N-terminal amino acid, Xaa-|-Yaa-, in which Xaa is preferably Leu, but may be other amino acids including Pro although not Arg or Lys, and Yaa may be Pro. Amino acid amides and methyl esters are also readily hydrolyzed, but rates on arylamides are exceedingly low.. The enzyme catalyses Release of an N-terminal amino acid, preferentially leucine, but not glutamic or aspartic acids.. In terms of biological role, presumably involved in the processing and regular turnover of intracellular proteins. Catalyzes the removal of unsubstituted N-terminal amino acids from various peptides. The protein is Probable cytosol aminopeptidase of Oleidesulfovibrio alaskensis (strain ATCC BAA-1058 / DSM 17464 / G20) (Desulfovibrio alaskensis).